The following is a 235-amino-acid chain: MQQHLKYKIMTNIKHLAIIMDGNARWADQHNLTKSEGHKAGADKIRELLPEFLNLNIPYITLYTFSSENWQRSSTEVDFLIKLLSIYLKTELNNLHKNGVKIKVIGRLTLLSSSLQKQINNAIELTKNNNKITLCIAFSYGSRQEIVDACTKIITSGKKAVSDSDIQHALYDPEMPDVDLLIRPGGVYRISNFLLWQAAYAELYFSPKYWPDFNKYDIQEAINDYSKRKRTFGKR.

The active site involves Asp21. Position 21 (Asp21) interacts with Mg(2+). Substrate-binding positions include 22-25 (GNAR), Trp26, Lys34, His38, and 66-68 (SSE). The active-site Proton acceptor is the Asn69. Substrate is bound by residues Trp70, Arg72, Arg183, and 189 to 191 (RIS). A Mg(2+)-binding site is contributed by Glu202.

It belongs to the UPP synthase family. In terms of assembly, homodimer. The cofactor is Mg(2+).

Its function is as follows. Catalyzes the condensation of isopentenyl diphosphate (IPP) with allylic pyrophosphates generating different type of terpenoids. The protein is Isoprenyl transferase of Rickettsia conorii (strain ATCC VR-613 / Malish 7).